Consider the following 315-residue polypeptide: N-acetyl-gamma-glutamyl-phosphate reductase (315 aa).

Cysteine 117 is a catalytic residue.

The protein belongs to the NAGSA dehydrogenase family. Type 2 subfamily.

The protein resides in the cytoplasm. The catalysed reaction is N-acetyl-L-glutamate 5-semialdehyde + phosphate + NADP(+) = N-acetyl-L-glutamyl 5-phosphate + NADPH + H(+). It functions in the pathway amino-acid biosynthesis; L-arginine biosynthesis; N(2)-acetyl-L-ornithine from L-glutamate: step 3/4. Catalyzes the NADPH-dependent reduction of N-acetyl-5-glutamyl phosphate to yield N-acetyl-L-glutamate 5-semialdehyde. In Burkholderia lata (strain ATCC 17760 / DSM 23089 / LMG 22485 / NCIMB 9086 / R18194 / 383), this protein is N-acetyl-gamma-glutamyl-phosphate reductase.